A 613-amino-acid chain; its full sequence is Zinc metalloproteinase-disintegrin-like atragin (613 aa).

An N-terminal signal peptide occupies residues 1–20 (MIQALLVIICLAVFPHQGSS). A propeptide spanning residues 21-191 (IILESGNVND…DESIEKTSQL (171 aa)) is cleaved from the precursor. The Peptidase M12B domain occupies 205–400 (KYIEFYVVVD…DRPQCILNKP (196 aa)). Ca(2+) contacts are provided by Glu-208 and Asp-292. 2 disulfides stabilise this stretch: Cys-316–Cys-395 and Cys-356–Cys-379. Residues His-341, His-345, and His-351 each coordinate Zn(2+). Ca(2+)-binding residues include Cys-395, Asn-398, Ile-410, Asn-413, Phe-415, Glu-417, Glu-420, and Asp-423. Positions 408 to 494 (PPICGNYFVE…ECPTDVFQRN (87 aa)) constitute a Disintegrin domain. 15 disulfides stabilise this stretch: Cys-411–Cys-440, Cys-422–Cys-435, Cys-424–Cys-430, Cys-434–Cys-457, Cys-448–Cys-454, Cys-453–Cys-479, Cys-466–Cys-486, Cys-473–Cys-505, Cys-498–Cys-510, Cys-517–Cys-567, Cys-532–Cys-575, Cys-542–Cys-577, Cys-545–Cys-555, Cys-562–Cys-601, and Cys-595–Cys-606. A glycan (N-linked (GlcNAc...) asparagine) is linked at Asn-436. Residues 472–474 (DCD) carry the D/ECD-tripeptide motif. Residues Asp-474, Leu-475, Glu-477, Asp-489, and Val-490 each contribute to the Ca(2+) site. The hypervariable region that may play important roles toward cell migration stretch occupies residues 560-574 (VKCGRLFCKRRNSMI).

This sequence belongs to the venom metalloproteinase (M12B) family. P-III subfamily. P-IIIa sub-subfamily. In terms of assembly, monomer. Zn(2+) serves as cofactor. Expressed by the venom gland.

The protein resides in the secreted. Snake venom zinc metalloproteinase that seems to inhibit cell migration. This activity is dominated by the local structure of the hyper-variable region. This is Zinc metalloproteinase-disintegrin-like atragin from Naja atra (Chinese cobra).